Reading from the N-terminus, the 955-residue chain is E3 ubiquitin-protein ligase MIB2 (955 aa).

M1 carries the post-translational modification N-acetylmethionine. One can recognise an MIB/HERC2 1 domain in the interval 1–80 (MDPDPQAGVQ…AHDLLLYDNA (80 aa)). The ZZ-type zinc-finger motif lies at 86–138 (HPNIICDCCKKHGLRGMRWKCRVCLDYDLCTQCYMHNKHELAHAFDRYETAHS). The Zn(2+) site is built by C91, C94, C106, C109, C115, C118, H124, and H128. Residues 149–227 (LPRIPLRGIF…KVDLKCVGEA (79 aa)) enclose the MIB/HERC2 2 domain. S251 is subject to Phosphoserine. ANK repeat units lie at residues 464 to 493 (QGRTALQVAAYLGQVELIRLLLQARAGVDL), 497 to 526 (EGNTALHYAALGNQPEATRVLLSAGCRADA), 530 to 559 (TQSTALHVAVQRGFLEVVRALCERGCDVNL), 563 to 595 (HSDTPLHSAISAGTGASGIVEVLTEVPNIDVTA), 599 to 628 (QGFTLLHHASLKGHALAVRKILARARQLVD), 633 to 663 (DGFTALHLAALNNHREVAQILIREGRCDVNV), 667 to 696 (KLQSPLHLAVQQAHVGLVPLLVDAGCSVNA), 700 to 728 (EGDTALHVALQRHQLLPLVADGAGGDPGP), and 769 to 798 (RGRSPLDLAAEGRVLKALQGCAQRFRERQA). 2 consecutive RING-type zinc fingers follow at residues 832–867 (CLVCSELALLVLFSPCQHRTVCEECARRMKKCIRCQ) and 911–944 (CPICIDSHIRLVFQCGHGACAPCGSALSACPICR).

Interacts with actin monomer. In terms of processing, ubiquitinated. Possibly via autoubiquitination. In terms of tissue distribution, expressed in skeletal muscle, and to a lesser extent in heart, brain and kidney.

The protein localises to the cytoplasm. It localises to the endosome. The catalysed reaction is S-ubiquitinyl-[E2 ubiquitin-conjugating enzyme]-L-cysteine + [acceptor protein]-L-lysine = [E2 ubiquitin-conjugating enzyme]-L-cysteine + N(6)-ubiquitinyl-[acceptor protein]-L-lysine.. The protein operates within protein modification; protein ubiquitination. In terms of biological role, E3 ubiquitin-protein ligase that mediates ubiquitination of Delta receptors, which act as ligands of Notch proteins. Positively regulates the Delta-mediated Notch signaling by ubiquitinating the intracellular domain of Delta, leading to endocytosis of Delta receptors. This chain is E3 ubiquitin-protein ligase MIB2, found in Homo sapiens (Human).